We begin with the raw amino-acid sequence, 122 residues long: Ribonuclease pancreatic (122 aa).

The span at 1-16 (ETPAEKFQRQHMDTEH) shows a compositional bias: basic and acidic residues. The disordered stretch occupies residues 1–20 (ETPAEKFQRQHMDTEHSTAS). Residues Lys6 and Arg9 each coordinate substrate. The Proton acceptor role is filled by His11. Disulfide bonds link Cys25–Cys83, Cys39–Cys94, Cys57–Cys109, and Cys64–Cys71. Residues 40 to 44 (KPLNT), Lys65, and Arg84 contribute to the substrate site. His117 acts as the Proton donor in catalysis.

It belongs to the pancreatic ribonuclease family. In terms of assembly, monomer. Interacts with and forms tight 1:1 complexes with RNH1. Dimerization of two such complexes may occur. Interaction with RNH1 inhibits this protein. Not glycosylated although the sequence N-V-T, a recognition site for carbohydrate attachment, is present. As to expression, pancreas.

The protein resides in the secreted. It carries out the reaction an [RNA] containing cytidine + H2O = an [RNA]-3'-cytidine-3'-phosphate + a 5'-hydroxy-ribonucleotide-3'-[RNA].. The enzyme catalyses an [RNA] containing uridine + H2O = an [RNA]-3'-uridine-3'-phosphate + a 5'-hydroxy-ribonucleotide-3'-[RNA].. In terms of biological role, endonuclease that catalyzes the cleavage of RNA on the 3' side of pyrimidine nucleotides. Acts on single-stranded and double-stranded RNA. In Osphranter rufus (Red kangaroo), this protein is Ribonuclease pancreatic (RNASE1).